The chain runs to 357 residues: Protein RecA (357 aa).

ATP is bound at residue 67–74 (GPESSGKT). The disordered stretch occupies residues 335-357 (LSSSASDDENSEGNVDFETGEVF).

It belongs to the RecA family.

The protein resides in the cytoplasm. In terms of biological role, can catalyze the hydrolysis of ATP in the presence of single-stranded DNA, the ATP-dependent uptake of single-stranded DNA by duplex DNA, and the ATP-dependent hybridization of homologous single-stranded DNAs. It interacts with LexA causing its activation and leading to its autocatalytic cleavage. The protein is Protein RecA of Shewanella sp. (strain MR-4).